Here is an 883-residue protein sequence, read N- to C-terminus: Alanine--tRNA ligase (883 aa).

Histidine 562, histidine 566, cysteine 664, and histidine 668 together coordinate Zn(2+).

Belongs to the class-II aminoacyl-tRNA synthetase family. As to quaternary structure, homotetramer. Requires Zn(2+) as cofactor.

The protein resides in the cytoplasm. It carries out the reaction tRNA(Ala) + L-alanine + ATP = L-alanyl-tRNA(Ala) + AMP + diphosphate. Catalyzes the attachment of alanine to tRNA(Ala) in a two-step reaction: alanine is first activated by ATP to form Ala-AMP and then transferred to the acceptor end of tRNA(Ala). Also edits incorrectly charged Ser-tRNA(Ala) and Gly-tRNA(Ala) via its editing domain. The protein is Alanine--tRNA ligase of Buchnera aphidicola subsp. Schizaphis graminum (strain Sg).